Here is a 407-residue protein sequence, read N- to C-terminus: Argininosuccinate synthase (407 aa).

ATP is bound by residues 16-24 (AYSGGLDTS) and alanine 44. Tyrosine 96 and serine 101 together coordinate L-citrulline. Glycine 126 is a binding site for ATP. L-aspartate-binding residues include threonine 128, asparagine 132, and aspartate 133. L-citrulline is bound at residue asparagine 132. L-citrulline contacts are provided by arginine 136, serine 185, serine 194, glutamate 270, and tyrosine 282.

The protein belongs to the argininosuccinate synthase family. Type 1 subfamily. In terms of assembly, homotetramer.

It localises to the cytoplasm. It catalyses the reaction L-citrulline + L-aspartate + ATP = 2-(N(omega)-L-arginino)succinate + AMP + diphosphate + H(+). The protein operates within amino-acid biosynthesis; L-arginine biosynthesis; L-arginine from L-ornithine and carbamoyl phosphate: step 2/3. The polypeptide is Argininosuccinate synthase (Shewanella amazonensis (strain ATCC BAA-1098 / SB2B)).